The chain runs to 458 residues: ATP synthase subunit beta (458 aa).

148–155 serves as a coordination point for ATP; it reads GGAGVGKT.

Belongs to the ATPase alpha/beta chains family. In terms of assembly, F-type ATPases have 2 components, CF(1) - the catalytic core - and CF(0) - the membrane proton channel. CF(1) has five subunits: alpha(3), beta(3), gamma(1), delta(1), epsilon(1). CF(0) has three main subunits: a(1), b(2) and c(9-12). The alpha and beta chains form an alternating ring which encloses part of the gamma chain. CF(1) is attached to CF(0) by a central stalk formed by the gamma and epsilon chains, while a peripheral stalk is formed by the delta and b chains.

It is found in the cell inner membrane. It carries out the reaction ATP + H2O + 4 H(+)(in) = ADP + phosphate + 5 H(+)(out). Functionally, produces ATP from ADP in the presence of a proton gradient across the membrane. The catalytic sites are hosted primarily by the beta subunits. This chain is ATP synthase subunit beta, found in Pseudomonas aeruginosa (strain LESB58).